Here is a 207-residue protein sequence, read N- to C-terminus: Large ribosomal subunit protein bL25 (207 aa).

It belongs to the bacterial ribosomal protein bL25 family. CTC subfamily. As to quaternary structure, part of the 50S ribosomal subunit; part of the 5S rRNA/L5/L18/L25 subcomplex. Contacts the 5S rRNA. Binds to the 5S rRNA independently of L5 and L18.

Its function is as follows. This is one of the proteins that binds to the 5S RNA in the ribosome where it forms part of the central protuberance. The protein is Large ribosomal subunit protein bL25 of Dictyoglomus turgidum (strain DSM 6724 / Z-1310).